The sequence spans 178 residues: ATP synthase subunit delta (178 aa).

It belongs to the ATPase delta chain family. F-type ATPases have 2 components, F(1) - the catalytic core - and F(0) - the membrane proton channel. F(1) has five subunits: alpha(3), beta(3), gamma(1), delta(1), epsilon(1). F(0) has three main subunits: a(1), b(2) and c(10-14). The alpha and beta chains form an alternating ring which encloses part of the gamma chain. F(1) is attached to F(0) by a central stalk formed by the gamma and epsilon chains, while a peripheral stalk is formed by the delta and b chains.

The protein resides in the cell membrane. Functionally, f(1)F(0) ATP synthase produces ATP from ADP in the presence of a proton or sodium gradient. F-type ATPases consist of two structural domains, F(1) containing the extramembraneous catalytic core and F(0) containing the membrane proton channel, linked together by a central stalk and a peripheral stalk. During catalysis, ATP synthesis in the catalytic domain of F(1) is coupled via a rotary mechanism of the central stalk subunits to proton translocation. This protein is part of the stalk that links CF(0) to CF(1). It either transmits conformational changes from CF(0) to CF(1) or is implicated in proton conduction. The sequence is that of ATP synthase subunit delta from Streptococcus equinus (Streptococcus bovis).